Consider the following 357-residue polypeptide: Histidine biosynthesis bifunctional protein HisB (357 aa).

Residues 1-168 (MTPILFIDRD…GIAHALADAP (168 aa)) are histidinol-phosphatase. D8 serves as the catalytic Nucleophile. Residues D8, D10, and D128 each coordinate Mg(2+). The active-site Proton donor is the D10. Residues 169–357 (RIAVVQRDTK…TALPTTKGAL (189 aa)) form an imidazoleglycerol-phosphate dehydratase region.

The protein in the N-terminal section; belongs to the histidinol-phosphatase family. In the C-terminal section; belongs to the imidazoleglycerol-phosphate dehydratase family. It depends on Mg(2+) as a cofactor.

It localises to the cytoplasm. The enzyme catalyses D-erythro-1-(imidazol-4-yl)glycerol 3-phosphate = 3-(imidazol-4-yl)-2-oxopropyl phosphate + H2O. The catalysed reaction is L-histidinol phosphate + H2O = L-histidinol + phosphate. Its pathway is amino-acid biosynthesis; L-histidine biosynthesis; L-histidine from 5-phospho-alpha-D-ribose 1-diphosphate: step 6/9. The protein operates within amino-acid biosynthesis; L-histidine biosynthesis; L-histidine from 5-phospho-alpha-D-ribose 1-diphosphate: step 8/9. The chain is Histidine biosynthesis bifunctional protein HisB from Stenotrophomonas maltophilia (strain R551-3).